We begin with the raw amino-acid sequence, 337 residues long: DNA-directed RNA polymerase subunit alpha (337 aa).

The alpha N-terminal domain (alpha-NTD) stretch occupies residues 1 to 233 (MVREEVAGST…DLFLPFLHTE (233 aa)). An alpha C-terminal domain (alpha-CTD) region spans residues 267–337 (IPLNCIFIDQ…LPMDLPKNKF (71 aa)).

It belongs to the RNA polymerase alpha chain family. As to quaternary structure, in plastids the minimal PEP RNA polymerase catalytic core is composed of four subunits: alpha, beta, beta', and beta''. When a (nuclear-encoded) sigma factor is associated with the core the holoenzyme is formed, which can initiate transcription.

It is found in the plastid. Its subcellular location is the chloroplast. The catalysed reaction is RNA(n) + a ribonucleoside 5'-triphosphate = RNA(n+1) + diphosphate. DNA-dependent RNA polymerase catalyzes the transcription of DNA into RNA using the four ribonucleoside triphosphates as substrates. This Oryza nivara (Indian wild rice) protein is DNA-directed RNA polymerase subunit alpha.